The sequence spans 910 residues: Seizure 6-like protein 2 (910 aa).

The signal sequence occupies residues 1–27 (MGTPRAQHPPPPQLLFLILLSCPWIQG). Topologically, residues 28 to 844 (LPLKEEEILP…DPSRQLEGGN (817 aa)) are extracellular. The interval 41–48 (SETPTVAS) is O-glycosylated at one site. A disordered region spans residues 65-152 (EMGYLPGSDR…PLGPEGGEEE (88 aa)). A compositionally biased stretch (pro residues) spans 123–145 (LTPPPGTTAPPPPSPASPGPPLG). C173 and C202 are oxidised to a cystine. Residues 173-286 (CNNNISEGEG…GGFRIHYQAY (114 aa)) form the CUB 1 domain. 3 N-linked (GlcNAc...) asparagine glycosylation sites follow: N176, N222, and N247. A Sushi 1 domain is found at 288–347 (LSCGFPPRPAHGDVSVTDLHPGGTATFHCDSGYQLQGEETLICLNGTRPSWNGETPSCMA). 6 cysteine pairs are disulfide-bonded: C290/C330, C316/C345, C349/C376, C464/C508, C491/C523, and C527/C553. N332, N355, N373, N473, and N517 each carry an N-linked (GlcNAc...) asparagine glycan. The CUB 2 domain occupies 349–459 (CGGTIHNATL…LLLSLRFEAF (111 aa)). The 64-residue stretch at 462 to 525 (DRCFAPFLAH…WNDTEPACKA (64 aa)) folds into the Sushi 2 domain. The CUB 3 domain occupies 527–638 (CGGELSEPAG…QGFVLHFKEV (112 aa)). The N-linked (GlcNAc...) asparagine glycan is linked to N641. Sushi domains follow at residues 642-701 (DTCP…ACQK), 703-766 (MTCA…KCAL), and 769-830 (EPCL…LCKV). Intrachain disulfides connect C644–C686, C672–C699, C705–C747, C733–C764, C771–C813, and C799–C828. The chain crosses the membrane as a helical span at residues 845-865 (LALAILLPLGLVIVLGSGVYI). At 866–910 (YYTKLQGKSLFGFSGSHSYSPITVESDFSNPLYEAGDTREYEVSI) the chain is on the cytoplasmic side.

This sequence belongs to the SEZ6 family. O-glycosylated with core 1 or possibly core 8 glycans.

The protein localises to the cell membrane. The protein resides in the endoplasmic reticulum membrane. Functionally, may contribute to specialized endoplasmic reticulum functions in neurons. The protein is Seizure 6-like protein 2 (SEZ6L2) of Homo sapiens (Human).